A 366-amino-acid polypeptide reads, in one-letter code: Chorismate synthase (366 aa).

Positions 48 and 54 each coordinate NADP(+). Residues 131 to 133 (RAS), 243 to 244 (NA), Gly-288, 303 to 307 (KPTPS), and Arg-329 contribute to the FMN site.

The protein belongs to the chorismate synthase family. As to quaternary structure, homotetramer. The cofactor is FMNH2.

It catalyses the reaction 5-O-(1-carboxyvinyl)-3-phosphoshikimate = chorismate + phosphate. Its pathway is metabolic intermediate biosynthesis; chorismate biosynthesis; chorismate from D-erythrose 4-phosphate and phosphoenolpyruvate: step 7/7. Functionally, catalyzes the anti-1,4-elimination of the C-3 phosphate and the C-6 proR hydrogen from 5-enolpyruvylshikimate-3-phosphate (EPSP) to yield chorismate, which is the branch point compound that serves as the starting substrate for the three terminal pathways of aromatic amino acid biosynthesis. This reaction introduces a second double bond into the aromatic ring system. The protein is Chorismate synthase of Bartonella quintana (strain Toulouse) (Rochalimaea quintana).